A 314-amino-acid chain; its full sequence is (-)-isopiperitenone reductase (314 aa).

V10–I33 is an NADP(+) binding site. S182 is a substrate binding site.

Belongs to the short-chain dehydrogenases/reductases (SDR) family.

Its subcellular location is the cytoplasm. It carries out the reaction (2R,5R)-isopulegone + NADP(+) = (6R)-isopiperitenone + NADPH + H(+). The protein operates within secondary metabolite biosynthesis; terpenoid biosynthesis. Monoterpene synthase that catalyzes the specific reduction of the 1(2)-double bond of (-)-isopiperitenone to produce (+)-cis-isopulegone. Does not catalyze the reverse reaction. Unable to reduce (+)-pulegone, (+)-cis-isopulegone, (-)-menthone or the 1,2-double bond of (-)-carvone. Able to utilize NADH with 20% the efficiency of NADPH. The sequence is that of (-)-isopiperitenone reductase from Mentha piperita (Peppermint).